Here is a 320-residue protein sequence, read N- to C-terminus: Cytochrome f (320 aa).

Residues methionine 1 to serine 32 form the signal peptide. The heme site is built by tyrosine 36, cysteine 56, cysteine 59, and histidine 60. The chain crosses the membrane as a helical span at residues isoleucine 286–lysine 306.

This sequence belongs to the cytochrome f family. In terms of assembly, the 4 large subunits of the cytochrome b6-f complex are cytochrome b6, subunit IV (17 kDa polypeptide, petD), cytochrome f and the Rieske protein, while the 4 small subunits are PetG, PetL, PetM and PetN. The complex functions as a dimer. Requires heme as cofactor.

The protein localises to the plastid. It is found in the chloroplast thylakoid membrane. In terms of biological role, component of the cytochrome b6-f complex, which mediates electron transfer between photosystem II (PSII) and photosystem I (PSI), cyclic electron flow around PSI, and state transitions. The polypeptide is Cytochrome f (Gnetum parvifolium (Small-leaved jointfir)).